Reading from the N-terminus, the 231-residue chain is 6-phosphogluconolactonase (231 aa).

This sequence belongs to the glucosamine/galactosamine-6-phosphate isomerase family. 6-phosphogluconolactonase subfamily.

It catalyses the reaction 6-phospho-D-glucono-1,5-lactone + H2O = 6-phospho-D-gluconate + H(+). It participates in carbohydrate degradation; pentose phosphate pathway; D-ribulose 5-phosphate from D-glucose 6-phosphate (oxidative stage): step 2/3. Its function is as follows. Hydrolysis of 6-phosphogluconolactone to 6-phosphogluconate. In Neisseria meningitidis serogroup A / serotype 4A (strain DSM 15465 / Z2491), this protein is 6-phosphogluconolactonase (pgl).